The following is a 390-amino-acid chain: Endonuclease 8-like 1 (390 aa).

P2 (schiff-base intermediate with DNA) is an active-site residue. The active-site Proton donor is the E3. Residue K54 is the Proton donor; for beta-elimination activity of the active site. DNA is bound at residue N176. A disordered region spans residues 278–390 (TIWFQGDPGP…SLEPEGTSAS (113 aa)). The segment covering 291-301 (KGRKSRKKKSK) has biased composition (basic residues). Residues 335–347 (TATQRPEGTSLQQ) are compositionally biased toward polar residues. R339 contributes to the DNA binding site. R339 acts as the Proton donor; for delta-elimination activity in catalysis.

It belongs to the FPG family. As to expression, ubiquitous.

It localises to the cytoplasm. Its subcellular location is the cytoskeleton. The protein resides in the microtubule organizing center. It is found in the centrosome. The protein localises to the nucleus. It localises to the chromosome. It carries out the reaction 2'-deoxyribonucleotide-(2'-deoxyribose 5'-phosphate)-2'-deoxyribonucleotide-DNA = a 3'-end 2'-deoxyribonucleotide-(2,3-dehydro-2,3-deoxyribose 5'-phosphate)-DNA + a 5'-end 5'-phospho-2'-deoxyribonucleoside-DNA + H(+). Functionally, involved in base excision repair of DNA damaged by oxidation or by mutagenic agents. Acts as a DNA glycosylase that recognizes and removes damaged bases. Has a preference for oxidized pyrimidines, such as thymine glycol, formamidopyrimidine (Fapy) and 5-hydroxyuracil. Has marginal activity towards 8-oxoguanine. Has AP (apurinic/apyrimidinic) lyase activity and introduces nicks in the DNA strand. Cleaves the DNA backbone by beta-delta elimination to generate a single-strand break at the site of the removed base with both 3'- and 5'-phosphates. Has DNA glycosylase/lyase activity towards mismatched uracil and thymine, in particular in U:C and T:C mismatches. Specifically binds 5-hydroxymethylcytosine (5hmC), suggesting that it acts as a specific reader of 5hmC. In Homo sapiens (Human), this protein is Endonuclease 8-like 1 (NEIL1).